We begin with the raw amino-acid sequence, 189 residues long: Copper transport protein CTR2 (189 aa).

The Cytoplasmic segment spans residues 1–81 (MDDKKTWSTV…VVFEWWHIKT (81 aa)). Residues 82–102 (LPGLILSCLAIFGLAYLYEYL) form a helical membrane-spanning segment. Residues 103 to 142 (KYCVHKRQLSQRVLLPNRSLTKINQADKVSNSILYGLQVG) are Vacuolar-facing. Residues 143 to 163 (FSFMLMLVFMTYNGWLMLAVV) form a helical membrane-spanning segment. Over 164–189 (CGAIWGNYSWCTSYSPEIDDSSLACH) the chain is Cytoplasmic.

The protein belongs to the copper transporter (Ctr) (TC 1.A.56) family. SLC31A subfamily. In terms of assembly, homomultimer.

It localises to the vacuole membrane. Functionally, provides bioavailable copper via mobilization of vacuolar copper stores and export to the cytoplasm. This Saccharomyces cerevisiae (strain ATCC 204508 / S288c) (Baker's yeast) protein is Copper transport protein CTR2 (CTR2).